The chain runs to 343 residues: Plasminogen (343 aa).

Kringle domains follow at residues 1–17 and 41–120; these read APQAPSVENPPEADCML and AQEP…GCVA. Positions 1 to 140 are plasmin heavy chain A; sequence APQAPSVENP…LRRRSREHFC (140 aa). 3 disulfide bridges follow: cysteine 15–cysteine 94, cysteine 36–cysteine 77, and cysteine 65–cysteine 89. The Peptidase S1 domain maps to 114-341; sequence VVGGCVATPH…YVPWIEETMR (228 aa). At serine 130 the chain carries Phosphoserine. Cysteine 140 and cysteine 156 form a disulfide bridge. Positions 141–343 are plasmin light chain B; it reads GGTLISPEWV…PWIEETMRRY (203 aa). Residues histidine 155 and aspartate 198 each act as charge relay system in the active site. Position 221 is a phosphoserine (serine 221). 3 disulfides stabilise this stretch: cysteine 232-cysteine 299, cysteine 262-cysteine 278, and cysteine 289-cysteine 317. The active-site Charge relay system is the serine 293.

Belongs to the peptidase S1 family. Plasminogen subfamily. As to quaternary structure, interacts with CSPG4 and AMOT. Interacts (via the Kringle domains) with HRG; the interaction tethers PLG to the cell surface and enhances its activation. Interacts (via Kringle 4 domain) with ADA; the interaction stimulates PLG activation when in complex with DPP4. Angiostatin: Interacts with ATP5F1A; the interaction inhibits most of the angiogenic effects of angiostatin.

The protein localises to the secreted. It catalyses the reaction Preferential cleavage: Lys-|-Xaa &gt; Arg-|-Xaa, higher selectivity than trypsin. Converts fibrin into soluble products.. Its activity is regulated as follows. Converted into plasmin by plasminogen activators, both plasminogen and its activator being bound to fibrin. Cannot be activated with streptokinase. Plasmin dissolves the fibrin of blood clots and acts as a proteolytic factor in a variety of other processes including embryonic development, tissue remodeling, tumor invasion, and inflammation. In ovulation, weakens the walls of the Graafian follicle. It activates the urokinase-type plasminogen activator, collagenases and several complement zymogens, such as C1, C4 and C5. Cleavage of fibronectin and laminin leads to cell detachment and apoptosis. Also cleaves fibrin, thrombospondin and von Willebrand factor. Its role in tissue remodeling and tumor invasion may be modulated by CSPG4. Binds to cells. The protein is Plasminogen (PLG) of Ovis aries (Sheep).